The chain runs to 473 residues: Aspartyl/glutamyl-tRNA(Asn/Gln) amidotransferase subunit B (473 aa).

Belongs to the GatB/GatE family. GatB subfamily. In terms of assembly, heterotrimer of A, B and C subunits.

The enzyme catalyses L-glutamyl-tRNA(Gln) + L-glutamine + ATP + H2O = L-glutaminyl-tRNA(Gln) + L-glutamate + ADP + phosphate + H(+). It carries out the reaction L-aspartyl-tRNA(Asn) + L-glutamine + ATP + H2O = L-asparaginyl-tRNA(Asn) + L-glutamate + ADP + phosphate + 2 H(+). Allows the formation of correctly charged Asn-tRNA(Asn) or Gln-tRNA(Gln) through the transamidation of misacylated Asp-tRNA(Asn) or Glu-tRNA(Gln) in organisms which lack either or both of asparaginyl-tRNA or glutaminyl-tRNA synthetases. The reaction takes place in the presence of glutamine and ATP through an activated phospho-Asp-tRNA(Asn) or phospho-Glu-tRNA(Gln). This Mycoplasmopsis synoviae (strain 53) (Mycoplasma synoviae) protein is Aspartyl/glutamyl-tRNA(Asn/Gln) amidotransferase subunit B.